The chain runs to 449 residues: C4-dicarboxylate transport protein (449 aa).

The disordered stretch occupies residues 1 to 20 (MSALTESFGPVPSAKSKPPA). Over residues 10–20 (PVPSAKSKPPA) the composition is skewed to low complexity. A run of 8 helical transmembrane segments spans residues 28 to 48 (LLYL…WLSP), 66 to 86 (LIKM…IAHI), 101 to 121 (LYFE…GNVV), 167 to 187 (GDIL…MTLG), 205 to 225 (FGVI…AMAF), 241 to 261 (LIAV…GLIA), 326 to 346 (IYMT…LTWT), and 370 to 390 (FITL…GMAI).

It belongs to the dicarboxylate/amino acid:cation symporter (DAACS) (TC 2.A.23) family.

The protein resides in the cell inner membrane. Responsible for the transport of dicarboxylates such as succinate, fumarate, and malate from the periplasm across the membrane. In Rhodopseudomonas palustris (strain BisB18), this protein is C4-dicarboxylate transport protein.